A 161-amino-acid polypeptide reads, in one-letter code: Endoribonuclease YbeY (161 aa).

Zn(2+) contacts are provided by His127, His131, and His137.

Belongs to the endoribonuclease YbeY family. Zn(2+) is required as a cofactor.

The protein resides in the cytoplasm. Single strand-specific metallo-endoribonuclease involved in late-stage 70S ribosome quality control and in maturation of the 3' terminus of the 16S rRNA. In Listeria innocua serovar 6a (strain ATCC BAA-680 / CLIP 11262), this protein is Endoribonuclease YbeY.